We begin with the raw amino-acid sequence, 311 residues long: Malate dehydrogenase (311 aa).

NAD(+) is bound by residues 7–13 (GAAGGIG) and aspartate 34. Residues arginine 81 and arginine 87 each coordinate substrate. NAD(+) is bound by residues asparagine 94 and 117–119 (ITN). Residues asparagine 119 and arginine 153 each contribute to the substrate site. Histidine 177 (proton acceptor) is an active-site residue. Methionine 227 is a binding site for NAD(+).

The protein belongs to the LDH/MDH superfamily. MDH type 1 family. Homodimer.

It catalyses the reaction (S)-malate + NAD(+) = oxaloacetate + NADH + H(+). Its function is as follows. Catalyzes the reversible oxidation of malate to oxaloacetate. The protein is Malate dehydrogenase of Aliivibrio fischeri (strain ATCC 700601 / ES114) (Vibrio fischeri).